Consider the following 185-residue polypeptide: Capsid protein (185 aa).

The tract at residues 135-185 (PNAPILSTLPETTVVRRRDRGRSPRRRTPSPRRRRSQSPRRRRSQSRESQC) is disordered. Basic residues predominate over residues 149 to 178 (VRRRDRGRSPRRRTPSPRRRRSQSPRRRRS). A phosphoserine; by host mark is found at Ser157, Ser164, and Ser172. One copy of the 1; half-length repeat lies at 157–163 (SPRRRTP). Positions 157-179 (SPRRRTPSPRRRRSQSPRRRRSQ) are 3 X 8 AA repeats of S-P-R-R-R-[PR]-S-Q. Positions 160 to 177 (RRTPSPRRRRSQSPRRRR) match the Bipartite nuclear localization signal motif. Tandem repeats lie at residues 164-171 (SPRRRRSQ) and 172-179 (SPRRRRSQ). The interval 179-185 (QSRESQC) is RNA binding.

This sequence belongs to the orthohepadnavirus core antigen family. As to quaternary structure, homodimerizes, then multimerizes. Interacts with cytosol exposed regions of viral L glycoprotein present in the reticulum-to-Golgi compartment. Interacts with human FLNB. Phosphorylated form interacts with host importin alpha; this interaction depends on the exposure of the NLS, which itself depends upon genome maturation and/or phosphorylation of the capsid protein. Interacts with host NUP153. In terms of processing, phosphorylated by host SRPK1, SRPK2, and maybe protein kinase C or GAPDH. Phosphorylation is critical for pregenomic RNA packaging. Protein kinase C phosphorylation is stimulated by HBx protein and may play a role in transport of the viral genome to the nucleus at the late step during the viral replication cycle.

It is found in the virion. The protein resides in the host cytoplasm. Its function is as follows. Self assembles to form an icosahedral capsid. Most capsids appear to be large particles with an icosahedral symmetry of T=4 and consist of 240 copies of capsid protein, though a fraction forms smaller T=3 particles consisting of 180 capsid proteins. Entering capsids are transported along microtubules to the nucleus. Phosphorylation of the capsid is thought to induce exposure of nuclear localization signal in the C-terminal portion of the capsid protein that allows binding to the nuclear pore complex via the importin (karyopherin-) alpha and beta. Capsids are imported in intact form through the nuclear pore into the nuclear basket, where it probably binds NUP153. Only capsids that contain the mature viral genome can release the viral DNA and capsid protein into the nucleoplasm. Immature capsids get stuck in the basket. Capsids encapsulate the pre-genomic RNA and the P protein. Pre-genomic RNA is reverse-transcribed into DNA while the capsid is still in the cytoplasm. The capsid can then either be directed to the nucleus, providing more genomes for transcription, or bud through the endoplasmic reticulum to provide new virions. The protein is Capsid protein of Hepatitis B virus genotype A3 (isolate Cameroon/CMR711/1994) (HBV-A).